We begin with the raw amino-acid sequence, 201 residues long: Small ribosomal subunit protein uS4 (201 aa).

Residues 93 to 155 form the S4 RNA-binding domain; it reads CRLDNIVYRM…SKSLSMFEVN (63 aa).

It belongs to the universal ribosomal protein uS4 family. Part of the 30S ribosomal subunit. Contacts protein S5. The interaction surface between S4 and S5 is involved in control of translational fidelity.

One of the primary rRNA binding proteins, it binds directly to 16S rRNA where it nucleates assembly of the body of the 30S subunit. Functionally, with S5 and S12 plays an important role in translational accuracy. In Elusimicrobium minutum (strain Pei191), this protein is Small ribosomal subunit protein uS4.